The following is an 821-amino-acid chain: G-type lectin S-receptor-like serine/threonine-protein kinase SD2-5 (821 aa).

A signal peptide spans 1–21 (MRGVFIVIVTCLVFLPDPLRA). Residues 22–429 (GVASIGSITP…NGEDDGKHFP (408 aa)) lie on the Extracellular side of the membrane. Positions 33 to 148 (FGGSQMNYIN…DGTSIWESFD (116 aa)) constitute a Bulb-type lectin domain. Residues N51, N121, N174, and N248 are each glycosylated (N-linked (GlcNAc...) asparagine). An EGF-like; atypical domain is found at 280-314 (PSDLCGTPEPCGPYYVCSGSKVCGCVSGLSRARSD). Intrachain disulfides connect C284/C296 and C290/C302. The PAN domain maps to 323–411 (CKKTKDNATL…SGFVSYIKIA (89 aa)). 3 N-linked (GlcNAc...) asparagine glycosylation sites follow: N329, N370, and N380. Cystine bridges form between C363-C385 and C367-C373. A helical membrane pass occupies residues 430 to 450 (YVVIIVVVTVFIIAVLIFVAF). At 451-821 (RIHKRKKMIL…LSAVRLSGPR (371 aa)) the chain is on the cytoplasmic side. In terms of domain architecture, Protein kinase spans 493 to 768 (NNFSVKLGQG…KVVQMLEGVF (276 aa)). ATP is bound by residues 499–507 (LGQGGFGSV) and K521. The interval 581-599 (KDGDVLLDWDTRFNIALGT) is caM-binding. D618 (proton acceptor) is an active-site residue. A Phosphoserine modification is found at S635. T652 carries the post-translational modification Phosphothreonine.

This sequence belongs to the protein kinase superfamily. Ser/Thr protein kinase family. As to quaternary structure, interacts with PUB9, PUB13, PUB14 and PUB29.

The protein resides in the membrane. The enzyme catalyses L-seryl-[protein] + ATP = O-phospho-L-seryl-[protein] + ADP + H(+). It carries out the reaction L-threonyl-[protein] + ATP = O-phospho-L-threonyl-[protein] + ADP + H(+). In Arabidopsis thaliana (Mouse-ear cress), this protein is G-type lectin S-receptor-like serine/threonine-protein kinase SD2-5 (SD25).